The following is a 309-amino-acid chain: Probable manganese-dependent inorganic pyrophosphatase (309 aa).

His-9, Asp-13, Asp-15, Asp-75, His-97, and Asp-149 together coordinate Mn(2+).

This sequence belongs to the PPase class C family. The cofactor is Mn(2+).

It localises to the cytoplasm. It catalyses the reaction diphosphate + H2O = 2 phosphate + H(+). The sequence is that of Probable manganese-dependent inorganic pyrophosphatase from Bacillus mycoides (strain KBAB4) (Bacillus weihenstephanensis).